The sequence spans 320 residues: Ferrochelatase (320 aa).

Residues H194 and E275 each contribute to the Fe cation site.

This sequence belongs to the ferrochelatase family. Monomer.

The protein resides in the cytoplasm. The catalysed reaction is heme b + 2 H(+) = protoporphyrin IX + Fe(2+). Its pathway is porphyrin-containing compound metabolism; protoheme biosynthesis; protoheme from protoporphyrin-IX: step 1/1. In terms of biological role, catalyzes the ferrous insertion into protoporphyrin IX. In Shigella boydii serotype 4 (strain Sb227), this protein is Ferrochelatase.